The following is a 248-amino-acid chain: Coenzyme F420:L-glutamate ligase (248 aa).

Residues 15–18 (IPLI), 45–46 (ET), and lysine 50 each bind GTP. Aspartate 115 provides a ligand contact to a divalent metal cation. Asparagine 118 lines the GTP pocket. Residues aspartate 155, serine 156, and glutamine 213 each contribute to the a divalent metal cation site. GTP is bound at residue 211–218 (MGQSNEGI).

This sequence belongs to the CofE family. As to quaternary structure, homodimer. The cofactor is Mg(2+). Requires Mn(2+) as cofactor. K(+) serves as cofactor.

It carries out the reaction oxidized coenzyme F420-0 + GTP + L-glutamate = oxidized coenzyme F420-1 + GDP + phosphate + H(+). The catalysed reaction is oxidized coenzyme F420-1 + GTP + L-glutamate = oxidized coenzyme F420-2 + GDP + phosphate + H(+). The protein operates within cofactor biosynthesis; coenzyme F420 biosynthesis. Catalyzes the GTP-dependent successive addition of two or more gamma-linked L-glutamates to the L-lactyl phosphodiester of 7,8-didemethyl-8-hydroxy-5-deazariboflavin (F420-0) to form coenzyme F420-0-glutamyl-glutamate (F420-2) or polyglutamated F420 derivatives. In Methanococcus maripaludis (strain DSM 14266 / JCM 13030 / NBRC 101832 / S2 / LL), this protein is Coenzyme F420:L-glutamate ligase.